A 423-amino-acid chain; its full sequence is Autophagy-related protein 18 (423 aa).

WD repeat units follow at residues 1–34 (MNYV…KIFT), 183–223 (AHRA…KLYQ), 228–267 (TYPS…TGMP), and 367–407 (SRSG…GGEG). The L/FRRG motif signature appears at 224 to 228 (FRRGT). Residues 260–320 (GGPVTGMPES…KSTGTFGSMI (61 aa)) form a disordered region.

It belongs to the WD repeat PROPPIN family. As to quaternary structure, component of the PI(3,5)P2 regulatory complex.

It is found in the preautophagosomal structure membrane. It localises to the vacuole membrane. Its subcellular location is the endosome membrane. Functionally, the PI(3,5)P2 regulatory complex regulates both the synthesis and turnover of phosphatidylinositol 3,5-bisphosphate (PtdIns(3,5)P2). Necessary for proper vacuole morphology. Plays an important role in osmotically-induced vacuole fragmentation. Required for cytoplasm to vacuole transport (Cvt) vesicle formation, pexophagy and starvation-induced autophagy. Involved in correct atg9 trafficking to the pre-autophagosomal structure. Might also be involved in premeiotic DNA replication. The sequence is that of Autophagy-related protein 18 (atg18) from Sclerotinia sclerotiorum (strain ATCC 18683 / 1980 / Ss-1) (White mold).